Consider the following 338-residue polypeptide: UDP-glucose 4-epimerase (338 aa).

NAD(+) is bound by residues 11-12, 31-36, 58-59, 80-84, N99, S124, Y149, K153, and F178; these read YI, DNLCNS, DI, and FAGLK. Substrate is bound by residues S124 and Y149. The active-site Proton acceptor is Y149. Residues N179, 199–200, 216–218, R231, 292–295, and Y299 each bind substrate; these read NL, AVF, and RDGD.

It belongs to the NAD(P)-dependent epimerase/dehydratase family. As to quaternary structure, homodimer. Requires NAD(+) as cofactor.

It carries out the reaction UDP-alpha-D-glucose = UDP-alpha-D-galactose. It functions in the pathway carbohydrate metabolism; galactose metabolism. Its function is as follows. Involved in the metabolism of galactose. Catalyzes the conversion of UDP-galactose (UDP-Gal) to UDP-glucose (UDP-Glc) through a mechanism involving the transient reduction of NAD. This Salmonella typhi protein is UDP-glucose 4-epimerase (galE).